A 49-amino-acid chain; its full sequence is MADNIILECTECGDRSYLSKKNKRKHPERLSLKKYCPVERRATLHRETK.

It belongs to the bacterial ribosomal protein bL33 family.

The chain is Large ribosomal subunit protein bL33 from Lactobacillus acidophilus (strain ATCC 700396 / NCK56 / N2 / NCFM).